The following is a 322-amino-acid chain: uncharacterized protein (322 aa).

Residues 1 to 13 show a composition bias toward polar residues; the sequence is MTNADEQNMGQQE. 2 disordered regions span residues 1 to 94 and 125 to 322; these read MTNA…EEYE and RREM…TDEE. Low complexity predominate over residues 14 to 31; sequence GTDTATTAQDTNTQTVGT. The span at 32–50 shows a compositional bias: polar residues; sequence QSENTQNTQQASDAQTEQT. Positions 64–75 are enriched in acidic residues; sequence EVDEDDVLDAQE. Basic and acidic residues-rich tracts occupy residues 141 to 227, 235 to 269, 277 to 295, and 308 to 322; these read GGDR…RGGD, RPREDRGGFGDRDRGGFRPREDRGERNFGGDRGGD, RPREDRNFGDREFRPRTDD, and ARADRGWANRRTDEE.

This is an uncharacterized protein from Deinococcus radiodurans (strain ATCC 13939 / DSM 20539 / JCM 16871 / CCUG 27074 / LMG 4051 / NBRC 15346 / NCIMB 9279 / VKM B-1422 / R1).